The chain runs to 206 residues: Protein-methionine-sulfoxide reductase heme-binding subunit MsrQ (206 aa).

6 helical membrane-spanning segments follow: residues 14–34 (IKPL…WLGA), 45–65 (FLTR…LAIT), 82–102 (MCGL…VWWD), 118–138 (PFIT…ATST), 149–169 (WQTL…HFWW), and 179–199 (QPLL…AAWW).

This sequence belongs to the MsrQ family. In terms of assembly, heterodimer of a catalytic subunit (MsrP) and a heme-binding subunit (MsrQ). FMN serves as cofactor. It depends on heme b as a cofactor.

It localises to the cell inner membrane. Its function is as follows. Part of the MsrPQ system that repairs oxidized periplasmic proteins containing methionine sulfoxide residues (Met-O), using respiratory chain electrons. Thus protects these proteins from oxidative-stress damage caused by reactive species of oxygen and chlorine generated by the host defense mechanisms. MsrPQ is essential for the maintenance of envelope integrity under bleach stress, rescuing a wide series of structurally unrelated periplasmic proteins from methionine oxidation. MsrQ provides electrons for reduction to the reductase catalytic subunit MsrP, using the quinone pool of the respiratory chain. The polypeptide is Protein-methionine-sulfoxide reductase heme-binding subunit MsrQ (Bordetella pertussis (strain Tohama I / ATCC BAA-589 / NCTC 13251)).